The following is a 501-amino-acid chain: Glucose-6-phosphate exchanger SLC37A2 (501 aa).

A helical transmembrane segment spans residues 19–39 (SWFRGFILLLTFLIYACYHMS). N-linked (GlcNAc...) asparagine glycans are attached at residues asparagine 53, asparagine 62, and asparagine 68. 5 consecutive transmembrane segments (helical) span residues 88-108 (GAVD…SGIF), 118-140 (LSAG…FWNI), 142-164 (MLWY…WPSV), 179-199 (FIMG…SLIA), and 210-230 (SFIV…LFLI). Positions 240–252 (PPRHHDDPEKEQD) are enriched in basic and acidic residues. A disordered region spans residues 240-266 (PPRHHDDPEKEQDNPEDPVNSPYSSRE). Transmembrane regions (helical) follow at residues 303–323 (CLLF…LYIF), 334–354 (GDLS…AGLI), 362–382 (ATTC…YNYI), 391–411 (IVML…ITTA), 434–454 (AIID…AGLI), and 462–482 (VFYM…RLVY).

This sequence belongs to the major facilitator superfamily. Organophosphate:Pi antiporter (OPA) (TC 2.A.1.4) family. Highly expressed in bone marrow derived macrophages, and weakly in spleen.

It is found in the endoplasmic reticulum membrane. It catalyses the reaction D-glucose 6-phosphate(in) + phosphate(out) = D-glucose 6-phosphate(out) + phosphate(in). With respect to regulation, inhibited by vanadate but not by chlorogenic acid. Functionally, inorganic phosphate and glucose-6-phosphate antiporter. May transport cytoplasmic glucose-6-phosphate into the lumen of the endoplasmic reticulum and translocate inorganic phosphate into the opposite direction. Independent of a lumenal glucose-6-phosphatase. May not play a role in homeostatic regulation of blood glucose levels. This chain is Glucose-6-phosphate exchanger SLC37A2, found in Mus musculus (Mouse).